Consider the following 180-residue polypeptide: UPF0227 protein YcfP (180 aa).

Belongs to the UPF0227 family.

This Escherichia coli O139:H28 (strain E24377A / ETEC) protein is UPF0227 protein YcfP.